Reading from the N-terminus, the 241-residue chain is 1-(5-phosphoribosyl)-5-[(5-phosphoribosylamino)methylideneamino] imidazole-4-carboxamide isomerase (241 aa).

The active-site Proton acceptor is Asp-11. Residue Asp-130 is the Proton donor of the active site.

This sequence belongs to the HisA/HisF family.

The protein localises to the cytoplasm. The catalysed reaction is 1-(5-phospho-beta-D-ribosyl)-5-[(5-phospho-beta-D-ribosylamino)methylideneamino]imidazole-4-carboxamide = 5-[(5-phospho-1-deoxy-D-ribulos-1-ylimino)methylamino]-1-(5-phospho-beta-D-ribosyl)imidazole-4-carboxamide. It functions in the pathway amino-acid biosynthesis; L-histidine biosynthesis; L-histidine from 5-phospho-alpha-D-ribose 1-diphosphate: step 4/9. This chain is 1-(5-phosphoribosyl)-5-[(5-phosphoribosylamino)methylideneamino] imidazole-4-carboxamide isomerase, found in Acidothermus cellulolyticus (strain ATCC 43068 / DSM 8971 / 11B).